The sequence spans 250 residues: Small ribosomal subunit protein uS3 (250 aa).

Residues 39–107 form the KH type-2 domain; sequence VREFLTKKLK…PAQVSINEID (69 aa). Positions 215 to 250 are disordered; that stretch reads MNPAPAEERPAKRGRGRGEGQERRGRRGDRAADKGE. The span at 220–250 shows a compositional bias: basic and acidic residues; sequence AEERPAKRGRGRGEGQERRGRRGDRAADKGE.

Belongs to the universal ribosomal protein uS3 family. As to quaternary structure, part of the 30S ribosomal subunit. Forms a tight complex with proteins S10 and S14.

Its function is as follows. Binds the lower part of the 30S subunit head. Binds mRNA in the 70S ribosome, positioning it for translation. This is Small ribosomal subunit protein uS3 from Acinetobacter baumannii (strain SDF).